A 290-amino-acid chain; its full sequence is Inositol monophosphatase 2 (290 aa).

Mg(2+)-binding residues include glutamate 83, aspartate 103, isoleucine 105, and aspartate 106. Glutamate 83 serves as a coordination point for substrate. Substrate-binding positions include 105-108, 207-209, glutamine 226, and aspartate 233; these read IDGT and GSS. Position 233 (aspartate 233) interacts with Mg(2+).

Belongs to the inositol monophosphatase superfamily. In terms of assembly, homodimer. Mg(2+) serves as cofactor. As to expression, mostly expressed in brain, small intestine, heart, kidney, and spleen (at protein level).

It is found in the cytoplasm. It carries out the reaction a myo-inositol phosphate + H2O = myo-inositol + phosphate. The enzyme catalyses 1D-myo-inositol 1-phosphate + H2O = myo-inositol + phosphate. It catalyses the reaction 1D-myo-inositol 2-phosphate + H2O = myo-inositol + phosphate. The catalysed reaction is 1D-myo-inositol 3-phosphate + H2O = myo-inositol + phosphate. It carries out the reaction 1D-myo-inositol 4-phosphate + H2O = myo-inositol + phosphate. The enzyme catalyses 1D-myo-inositol 5-phosphate + H2O = myo-inositol + phosphate. It catalyses the reaction 1D-myo-inositol 6-phosphate + H2O = myo-inositol + phosphate. The catalysed reaction is alpha-D-glucose 1-phosphate + H2O = D-glucose + phosphate. It carries out the reaction glycerol 2-phosphate + H2O = glycerol + phosphate. The enzyme catalyses adenosine 2'-phosphate + H2O = adenosine + phosphate. The protein operates within polyol metabolism; myo-inositol biosynthesis; myo-inositol from D-glucose 6-phosphate: step 2/2. Phosphatase that can use myo-inositol monophosphates, myo-inositol 1,4-diphosphate, scyllo-inositol-1,4-diphosphate, glucose-1-phosphate, beta-glycerophosphate and 2'-AMP as substrates in vitro. No physiological substrates has been described yet. Has been implicated as the pharmacological target for lithium Li(+) action in brain. The protein is Inositol monophosphatase 2 of Mus musculus (Mouse).